Here is a 66-residue protein sequence, read N- to C-terminus: Type 3 secretion system chaperone YscE (66 aa).

The protein belongs to the YscE family. Component of the heterodimeric YscE-YscG chaperone. The YscE-YscG chaperone forms a stable ternary complex with YscF/SctF.

Its subcellular location is the cytoplasm. Chaperone of the type III secretion system (T3SS), also called injectisome, which is used to inject bacterial effector proteins into eukaryotic host cells. Along with YscG, prevents premature polymerization of the YscF/SctF needle protein within the cytoplasm. Required for Yop secretion. The protein is Type 3 secretion system chaperone YscE of Yersinia enterocolitica.